Reading from the N-terminus, the 146-residue chain is Large ribosomal subunit protein uL15 (146 aa).

Over residues 1-18 (MKLHELKPSEGSRKERNR) the composition is skewed to basic and acidic residues. The tract at residues 1–57 (MKLHELKPSEGSRKERNRVGRGIGSGNGKTSGKGHKGQNARSGGGVRPGFEGGQMPL) is disordered. Gly residues-rich tracts occupy residues 21-31 (RGIGSGNGKTS) and 42-52 (SGGGVRPGFEG).

It belongs to the universal ribosomal protein uL15 family. Part of the 50S ribosomal subunit.

Its function is as follows. Binds to the 23S rRNA. The chain is Large ribosomal subunit protein uL15 from Bacillus pumilus (strain SAFR-032).